Here is a 591-residue protein sequence, read N- to C-terminus: Probable auxin efflux carrier component 3b (591 aa).

Topologically, residues 1-6 are extracellular; that stretch reads MISWHE. The chain crosses the membrane as a helical span at residues 7–27; it reads LYMVLSAVVPLYVAMMVAYGS. Residues 28 to 38 are Cytoplasmic-facing; that stretch reads VRWWGVLTPEQ. A helical membrane pass occupies residues 39 to 59; it reads CSGINRFVAVIAVPLLSFHFI. Residue valine 51 coordinates (indol-3-yl)acetate. The Extracellular portion of the chain corresponds to 60 to 70; the sequence is SSSDPYAMNLR. A helical membrane pass occupies residues 71–93; that stretch reads FVAADTLQKVLVLAALAAWSRFP. Over 94-107 the chain is Cytoplasmic; sequence ARFVPPAWPPLDCS. Residues 108–128 traverse the membrane as a helical segment; that stretch reads ITLFSVSTLPNTLVMGIPLLV. (indol-3-yl)acetate is bound by residues asparagine 118 and leucine 120. The Extracellular segment spans residues 129–137; that stretch reads SMYGPYSGD. A helical membrane pass occupies residues 138 to 158; that stretch reads LMVQIVVLQSIVWYTLLLFLF. Tyrosine 151 serves as a coordination point for (indol-3-yl)acetate. Topologically, residues 159–450 are cytoplasmic; it reads EFRAARVLIA…LIRNPNTYAS (292 aa). 2 stretches are compositionally biased toward polar residues: residues 243-254 and 283-292; these read SRNATPRGSTFT and SSSRQHTPRP. Disordered regions lie at residues 243–269, 283–313, 344–374, and 392–420; these read SRNA…SALR, SSSR…APTN, ETRR…GERA, and AGAK…RARG. A compositionally biased stretch (low complexity) spans 395–407; sequence KTEQQTTAVTTTT. A helical membrane pass occupies residues 451 to 471; sequence LIGLTWSLIAFRFHITMPIIV. At 472-474 the chain is on the extracellular side; sequence AKS. A helical membrane pass occupies residues 475 to 495; it reads ISILSDAGLGMAMFSLGLFMA. The Cytoplasmic segment spans residues 496–511; it reads TQPKIIACGYSVAAAS. Residues 512–532 traverse the membrane as a helical segment; sequence MGVRFFFGPAIMAAASAAVGI. At 533 to 535 the chain is on the extracellular side; sequence RGT. The helical transmembrane segment at 536-556 threads the bilayer; the sequence is LLRIAIVQAALPQGIVPFVFA. (indol-3-yl)acetate-binding residues include isoleucine 550 and valine 551. At 557–568 the chain is on the cytoplasmic side; sequence KEYNLHATILCT. A helical transmembrane segment spans residues 569-589; sequence LVIFGMLIALPITLVYYIILG. Residues 590-591 are Extracellular-facing; that stretch reads LL.

It belongs to the auxin efflux carrier (TC 2.A.69.1) family. As to quaternary structure, homodimer. Expressed in stem bases and leaves.

The protein localises to the membrane. May act as a component of the auxin efflux carrier. The protein is Probable auxin efflux carrier component 3b of Oryza sativa subsp. japonica (Rice).